The sequence spans 91 residues: Small ribosomal subunit protein uS15c (91 aa).

This sequence belongs to the universal ribosomal protein uS15 family. Part of the 30S ribosomal subunit.

It localises to the plastid. It is found in the chloroplast. This is Small ribosomal subunit protein uS15c (rps15) from Cicer arietinum (Chickpea).